The chain runs to 126 residues: Glycine cleavage system H protein (126 aa).

In terms of domain architecture, Lipoyl-binding spans 22-104; it reads TVTIGVTDFA…YGEGWMIKIK (83 aa). The residue at position 63 (K63) is an N6-lipoyllysine.

The protein belongs to the GcvH family. As to quaternary structure, the glycine cleavage system is composed of four proteins: P, T, L and H. The cofactor is (R)-lipoate.

Its function is as follows. The glycine cleavage system catalyzes the degradation of glycine. The H protein shuttles the methylamine group of glycine from the P protein to the T protein. The polypeptide is Glycine cleavage system H protein (Christiangramia forsetii (strain DSM 17595 / CGMCC 1.15422 / KT0803) (Gramella forsetii)).